Reading from the N-terminus, the 530-residue chain is Vesicular acetylcholine transporter (530 aa).

Residues Met1 to Arg33 lie on the Cytoplasmic side of the membrane. Residues Leu34 to Val54 form a helical membrane-spanning segment. Topologically, residues Pro55 to Gly125 are lumenal, vesicle. 2 N-linked (GlcNAc...) asparagine glycosylation sites follow: Asn89 and Asn96. The helical transmembrane segment at Val126–Ile146 threads the bilayer. Residues Asp147 to Asp152 are Cytoplasmic-facing. A helical transmembrane segment spans residues Val153 to Glu173. At Asp174–Arg182 the chain is on the lumenal, vesicle side. Residues Ser183–Lys203 traverse the membrane as a helical segment. Over Tyr204 to Ala213 the chain is Cytoplasmic. Residues Leu214–Ile234 traverse the membrane as a helical segment. The Lumenal, vesicle segment spans residues Leu235–Arg242. The chain crosses the membrane as a helical span at residues Val243–Ala263. At Lys264–Pro289 the chain is on the cytoplasmic side. Residues Tyr290–Pro310 traverse the membrane as a helical segment. The Lumenal, vesicle portion of the chain corresponds to Thr311 to Trp325. The helical transmembrane segment at Glu326–Val346 threads the bilayer. At Arg347–Gln356 the chain is on the cytoplasmic side. The helical transmembrane segment at Trp357–Cys377 threads the bilayer. Residues Arg378–Cys388 lie on the Lumenal, vesicle side of the membrane. A helical membrane pass occupies residues Gly389–Val409. The Cytoplasmic segment spans residues Asp410–Ala422. The chain crosses the membrane as a helical span at residues Ile423–Val443. The Lumenal, vesicle portion of the chain corresponds to His444 to Gly447. The helical transmembrane segment at Phe448 to Leu468 threads the bilayer. At Leu469–Ser530 the chain is on the cytoplasmic side. Residues Asn471–Ser530 are mediates interaction with SEC14L1. Residues Gly504–Ser530 form a disordered region.

It belongs to the major facilitator superfamily. Vesicular transporter family. In terms of assembly, interacts with SEC14L1. As to expression, high expression in all major cholinergic cell groups, including peripheral postganglionic parasympathetic cells, preganglionic sympathetic and parasympathetic cells, ventral spinal cord and brainstem motoneurons, cell groups in the basal forebrain, the habenula and the corpus striatum. Weakly expressed in the cortex and hippocampus.

The protein localises to the cytoplasmic vesicle. The protein resides in the secretory vesicle. It is found in the synaptic vesicle membrane. It catalyses the reaction acetylcholine(out) + 2 H(+)(in) = acetylcholine(in) + 2 H(+)(out). The enzyme catalyses choline(in) + 2 H(+)(out) = choline(out) + 2 H(+)(in). The catalysed reaction is serotonin(in) + 2 H(+)(out) = serotonin(out) + 2 H(+)(in). Its activity is regulated as follows. Potently inhibited by L-vesamicol. In terms of biological role, electrogenic antiporter that exchanges one cholinergic neurotransmitter, acetylcholine or choline, with two intravesicular protons across the membrane of synaptic vesicles. Uses the electrochemical proton gradient established by the V-type proton-pump ATPase to store neurotransmitters inside the vesicles prior to their release via exocytosis. Determines cholinergic vesicular quantal size at presynaptic nerve terminals in developing neuro-muscular junctions with an impact on motor neuron differentiation and innervation pattern. Part of forebrain cholinergic system, regulates hippocampal synapse transmissions that underlie spatial memory formation. Can transport serotonin. In Rattus norvegicus (Rat), this protein is Vesicular acetylcholine transporter (Slc18a3).